A 175-amino-acid polypeptide reads, in one-letter code: Ribosome maturation factor RimM (175 aa).

A PRC barrel domain is found at 99-172 (SIEFTWEHFI…KLTMIIPDGL (74 aa)).

The protein belongs to the RimM family. As to quaternary structure, binds ribosomal protein uS19.

It is found in the cytoplasm. An accessory protein needed during the final step in the assembly of 30S ribosomal subunit, possibly for assembly of the head region. Essential for efficient processing of 16S rRNA. May be needed both before and after RbfA during the maturation of 16S rRNA. It has affinity for free ribosomal 30S subunits but not for 70S ribosomes. The polypeptide is Ribosome maturation factor RimM (Porphyromonas gingivalis (strain ATCC BAA-308 / W83)).